The chain runs to 947 residues: MIGALARRLFGSPNDRRIKAYQPRVDAINALEPELVALSDEALRGRTAEFRQQLADGKTLDDILVPAFATVREAAKRTLGQRHFDVQLIGGMVLHEGDIAEMKTGEGKTLVATLAVYLNALAGKGVHVVTVNDYLARRDSAWMGEIYGFLGMTTGVIVHGLDDQQRQAAYACDITYGTNNEYGFDYLRDNMKYRLEDMVQRGHYYAIVDEVDSILIDEARTPLIISGPLDDRSEFYNTIDTFMPSLDKATDYEVDEKQRTVTLTEAGMEHIEVLLRDAGQLKGDSLYDVENVSVVHHVNQALRAHSLFQRDKDYIVRDDEVVIIDEFTGRMMPGRRYSEGLHQALEAKEHVQVQPENQTLASITFQNYFRMYEKLSGMTGTALTEADELFDIYKLEVVEIPTNVQIARLDEDDEVYRTQSEKYAAILAEVERANSRLQPVLVGTASIEKSEVLGEYLKKHGYKQIDFTDPKGMEKLYAAARAGKPAKLFAVLNARFHEQEAYIVAEAGVPGAITIATNMAGRGTDIKLGGSLEMRIQHETVGITDEAEKAAKIELIKADIERFREIVLKAEEVVEVEPAKGNKPAKTLTRPGGLYIMGSERHESRRIDNQLRGRSGRQGDPGRSKFFLSLEDDLMRIFGSDRLDTMLTRLGLKEGEAIIHPWINKALEKAQQKVEARNFDIRKNLLKFDNVQNDQRKEIFDHRISLMKDDSVAETVAGMRHDFIDDIVAKHVPEHAYAEQWDVAGLKEELERVLGLDLPVDEWAKEEGIADEELLTRIEQRVDEHMAAKVGQWGPEVMRYAEKSILLQTLDHLWREHLVMLDHLRNVIGLRGYGQRDPLQEYKSEAFALFEAMITHLREAVTAQLMRVEIVPPEQPQELPPMEGHKFNADTGEDDMAFANVSLAPADNADKTARNPNDPSTWGKVGRNEDCPCGSGKKYKHCHGRYA.

Residues glutamine 87, 105 to 109 (GEGKT), and aspartate 525 each bind ATP. Residues 905–928 (PADNADKTARNPNDPSTWGKVGRN) are disordered. Zn(2+)-binding residues include cysteine 931, cysteine 933, cysteine 942, and histidine 943.

The protein belongs to the SecA family. Monomer and homodimer. Part of the essential Sec protein translocation apparatus which comprises SecA, SecYEG and auxiliary proteins SecDF-YajC and YidC. Zn(2+) is required as a cofactor.

The protein localises to the cell inner membrane. The protein resides in the cytoplasm. It carries out the reaction ATP + H2O + cellular proteinSide 1 = ADP + phosphate + cellular proteinSide 2.. Functionally, part of the Sec protein translocase complex. Interacts with the SecYEG preprotein conducting channel. Has a central role in coupling the hydrolysis of ATP to the transfer of proteins into and across the cell membrane, serving both as a receptor for the preprotein-SecB complex and as an ATP-driven molecular motor driving the stepwise translocation of polypeptide chains across the membrane. The chain is Protein translocase subunit SecA from Rhodopseudomonas palustris (strain BisB18).